A 68-amino-acid polypeptide reads, in one-letter code: uncharacterized protein (68 aa).

This is an uncharacterized protein from Escherichia coli O6:H1 (strain CFT073 / ATCC 700928 / UPEC).